We begin with the raw amino-acid sequence, 200 residues long: MFNIPAVAVSYLIGSLSFAVIVSKYYGMDDPRTYGSGNPGATNVLRSGKKKAAALTLLGDAAKGLVAVLLARVLQEPLGLSDSAIAAVALAALVGHMWPVFFGFKGGKGVATALGVLLALSPATALVCALIWLVMAFGFKVSSLAALVATTAAPLAALFFMPHTSWIFATLAIAILVLLRHKSNILNLIKGKESKIGEKR.

5 consecutive transmembrane segments (helical) span residues 2-22 (FNIPAVAVSYLIGSLSFAVIV), 51-71 (KAAALTLLGDAAKGLVAVLLA), 84-104 (AIAAVALAALVGHMWPVFFGF), 114-134 (LGVLLALSPATALVCALIWLV), and 158-178 (LFFMPHTSWIFATLAIAILVL).

This sequence belongs to the PlsY family. Probably interacts with PlsX.

It localises to the cell inner membrane. The catalysed reaction is an acyl phosphate + sn-glycerol 3-phosphate = a 1-acyl-sn-glycero-3-phosphate + phosphate. Its pathway is lipid metabolism; phospholipid metabolism. Catalyzes the transfer of an acyl group from acyl-phosphate (acyl-PO(4)) to glycerol-3-phosphate (G3P) to form lysophosphatidic acid (LPA). This enzyme utilizes acyl-phosphate as fatty acyl donor, but not acyl-CoA or acyl-ACP. The sequence is that of Glycerol-3-phosphate acyltransferase from Neisseria gonorrhoeae (strain ATCC 700825 / FA 1090).